The following is a 329-amino-acid chain: Thioredoxin domain-containing protein 6 (329 aa).

The Thioredoxin domain occupies 11-115 (QVNINTQELW…QKTILQQLEA (105 aa)). Residues 157–303 (GKTCTLGIIK…LFPSFKFSDK (147 aa)) are NDK. A disordered region spans residues 303–329 (KDKEAPPGAEAQTMVGPVEDPCMSERI).

This sequence belongs to the NDK family. In terms of assembly, monomer and homodimer. In terms of tissue distribution, expressed in lung airway epithelium (at protein level).

Its subcellular location is the cytoplasm. The protein resides in the cytoskeleton. The protein localises to the cilium axoneme. It localises to the dynein axonemal particle. Functionally, may be a regulator of microtubule physiology. This chain is Thioredoxin domain-containing protein 6, found in Mus musculus (Mouse).